Reading from the N-terminus, the 167-residue chain is Signal peptidase complex catalytic subunit SEC11 (167 aa).

Residues 1-12 are Cytoplasmic-facing; sequence MNLRLELTRFLK. A helical; Signal-anchor for type II membrane protein transmembrane segment spans residues 13-30; it reads LCFVLSSAFMFWKGLSIA. Topologically, residues 31–167 are lumenal; it reads TNSHSPIVVV…LGISALLSNE (137 aa). Residues serine 44, histidine 83, and aspartate 109 each act as charge relay system in the active site. The interval 153-164 is C-terminal short (CTS) helix; it reads ALMGFLGISALL.

Belongs to the peptidase S26B family. Component of the signal peptidase complex (SPC) composed of a catalytic subunit SEC11 and three accessory subunits SPC1, SPC2 and SPC3. The complex induces a local thinning of the ER membrane which is used to measure the length of the signal peptide (SP) h-region of protein substrates. This ensures the selectivity of the complex towards h-regions shorter than 18-20 amino acids. SPC associates with the translocon complex.

It localises to the endoplasmic reticulum membrane. The enzyme catalyses Cleavage of hydrophobic, N-terminal signal or leader sequences from secreted and periplasmic proteins.. Its function is as follows. Catalytic component of the signal peptidase complex (SPC) which catalyzes the cleavage of N-terminal signal sequences from nascent proteins as they are translocated into the lumen of the endoplasmic reticulum. Specifically cleaves N-terminal signal peptides that contain a hydrophobic alpha-helix (h-region) shorter than 18-20 amino acids. This is Signal peptidase complex catalytic subunit SEC11 (SEC11) from Zygosaccharomyces rouxii (strain ATCC 2623 / CBS 732 / NBRC 1130 / NCYC 568 / NRRL Y-229).